A 360-amino-acid chain; its full sequence is UDP-3-O-acylglucosamine N-acyltransferase (360 aa).

His-256 functions as the Proton acceptor in the catalytic mechanism. The disordered stretch occupies residues 341–360 (EGSGAETAARPDDDRDEGRG). The span at 349-360 (ARPDDDRDEGRG) shows a compositional bias: basic and acidic residues.

It belongs to the transferase hexapeptide repeat family. LpxD subfamily. In terms of assembly, homotrimer.

It catalyses the reaction a UDP-3-O-[(3R)-3-hydroxyacyl]-alpha-D-glucosamine + a (3R)-hydroxyacyl-[ACP] = a UDP-2-N,3-O-bis[(3R)-3-hydroxyacyl]-alpha-D-glucosamine + holo-[ACP] + H(+). It functions in the pathway bacterial outer membrane biogenesis; LPS lipid A biosynthesis. Functionally, catalyzes the N-acylation of UDP-3-O-acylglucosamine using 3-hydroxyacyl-ACP as the acyl donor. Is involved in the biosynthesis of lipid A, a phosphorylated glycolipid that anchors the lipopolysaccharide to the outer membrane of the cell. The sequence is that of UDP-3-O-acylglucosamine N-acyltransferase from Rhodopseudomonas palustris (strain TIE-1).